A 57-amino-acid polypeptide reads, in one-letter code: Aminopeptidase A (57 aa).

The Extracellular segment spans residues 1–57 (YLTDHYFKVDLNSTVTQQRFLLDPSELAGITIMQPSDSNIEWLKQYRDDVATWLENS). Asn-12 carries N-linked (GlcNAc...) asparagine glycosylation.

The protein belongs to the peptidase M1 family. Homodimer; disulfide-linked. Zn(2+) is required as a cofactor.

Its subcellular location is the cell membrane. The catalysed reaction is Release of N-terminal glutamate (and to a lesser extent aspartate) from a peptide.. Inhibited by the aminopeptidase competitive inhibitors amastatin (Leu and acidic inhibitor), and bestatin (Leu inhibitor), by chelating agents EDTA, and 1,10-Phenanthroline, as well as by Zn(2+) ions. Substrate specificity is modulated by Ca(2+), Ba(2+), and Mn(2+) ions which enhances the enzymatic activity for cleavage of acidic residues. In terms of biological role, venom protein that cleaves N-terminal acidic residues from peptides with high potency in presence of calcium. It may have several roles in venom including alteration of blood pressure by cleaving circulating angiotensin-2, general degradation of host tissue, increase of permeability to other venom components, and/or processing of other toxins in the venom. The sequence is that of Aminopeptidase A from Gloydius blomhoffii (Mamushi).